The sequence spans 240 residues: 1-(5-phosphoribosyl)-5-[(5-phosphoribosylamino)methylideneamino] imidazole-4-carboxamide isomerase 1 (240 aa).

D8 acts as the Proton acceptor in catalysis. D129 serves as the catalytic Proton donor.

Belongs to the HisA/HisF family.

It is found in the cytoplasm. It catalyses the reaction 1-(5-phospho-beta-D-ribosyl)-5-[(5-phospho-beta-D-ribosylamino)methylideneamino]imidazole-4-carboxamide = 5-[(5-phospho-1-deoxy-D-ribulos-1-ylimino)methylamino]-1-(5-phospho-beta-D-ribosyl)imidazole-4-carboxamide. It participates in amino-acid biosynthesis; L-histidine biosynthesis; L-histidine from 5-phospho-alpha-D-ribose 1-diphosphate: step 4/9. This chain is 1-(5-phosphoribosyl)-5-[(5-phosphoribosylamino)methylideneamino] imidazole-4-carboxamide isomerase 1, found in Ruegeria pomeroyi (strain ATCC 700808 / DSM 15171 / DSS-3) (Silicibacter pomeroyi).